Reading from the N-terminus, the 1097-residue chain is uncharacterized protein (1097 aa).

The stretch at 31–1087 forms a coiled coil; sequence LLNVARQEEE…TALNKLRTRH (1057 aa).

This sequence belongs to the TRAFAC class myosin-kinesin ATPase superfamily. Myosin family. In terms of tissue distribution, specifically expressed in muscles of the head including temporalis and tensor veli palatini.

Functionally, has most probably lost the function in masticatory muscles contraction suspected for its homologs in dog (AC F1PT61) and apes. This is an uncharacterized protein from Homo sapiens (Human).